Reading from the N-terminus, the 290-residue chain is MDKIIKTISENGSFRAYVLDSTETVRTAQEKHQTQASSTVALGRTLIASQILAANEKGQTKITVKVLGTSSLGAIITVADTEGNVKGYVQNPGVDIKKTATGEVLVGPFVGQGEFLVITDYGTGNPYNSMTPLISGEIGEDLAFYLTESQQTPSAVGLNVLLDENDKVKVAGGFLVQVLPGAKEAEIARFEKRIQEMPAISKLLESDDHIEALLAAIYGDEPYKRLSEEEIRFQCDCSKERFMNALATLPKADLEEMRDQDQGAEIICQFCQTAYHFDQNDLEELIRDKS.

2 disulfide bridges follow: Cys-235–Cys-237 and Cys-268–Cys-271.

It belongs to the HSP33 family. Under oxidizing conditions two disulfide bonds are formed involving the reactive cysteines. Under reducing conditions zinc is bound to the reactive cysteines and the protein is inactive.

The protein localises to the cytoplasm. In terms of biological role, redox regulated molecular chaperone. Protects both thermally unfolding and oxidatively damaged proteins from irreversible aggregation. Plays an important role in the bacterial defense system toward oxidative stress. The sequence is that of 33 kDa chaperonin from Streptococcus gordonii (strain Challis / ATCC 35105 / BCRC 15272 / CH1 / DL1 / V288).